A 504-amino-acid chain; its full sequence is DNA-binding protein reb1 (504 aa).

Residues Asp30–Ile51 are disordered. HTH myb-type domains follow at residues Asn308–Asp361 and Lys362–Ser422. DNA-binding regions (H-T-H motif) lie at residues Trp335–Val357 and Trp395–Thr418.

Its subcellular location is the nucleus. In terms of biological role, DNA-binding protein that recognizes sites within both the enhancer and the promoter of rRNA transcription, as well as upstream of many genes transcribed by RNA polymerase II. Has a role in the termination of RNA polymerase I catalyzed transcription. The chain is DNA-binding protein reb1 (reb1) from Schizosaccharomyces pombe (strain 972 / ATCC 24843) (Fission yeast).